A 205-amino-acid chain; its full sequence is Protein N-terminal glutamine amidohydrolase (205 aa).

Residues Cys20, His74, and Asp90 contribute to the active site.

Belongs to the NTAQ1 family. As to quaternary structure, monomer.

It catalyses the reaction N-terminal L-glutaminyl-[protein] + H2O = N-terminal L-glutamyl-[protein] + NH4(+). Mediates the side-chain deamidation of N-terminal glutamine residues to glutamate, an important step in N-end rule pathway of protein degradation. Conversion of the resulting N-terminal glutamine to glutamate renders the protein susceptible to arginylation, polyubiquitination and degradation as specified by the N-end rule. Does not act on substrates with internal or C-terminal glutamine and does not act on non-glutamine residues in any position. The chain is Protein N-terminal glutamine amidohydrolase (tun) from Drosophila virilis (Fruit fly).